Here is a 650-residue protein sequence, read N- to C-terminus: Chaperone protein DnaK (650 aa).

Position 200 is a phosphothreonine; by autocatalysis (Thr200). Over residues 611–636 (AQQAGAAGAAGAAEGAAHAGGAQQAA) the composition is skewed to low complexity. Residues 611 to 637 (AQQAGAAGAAGAAEGAAHAGGAQQAAD) are disordered.

This sequence belongs to the heat shock protein 70 family.

Its function is as follows. Acts as a chaperone. This Burkholderia ambifaria (strain MC40-6) protein is Chaperone protein DnaK.